Consider the following 1195-residue polypeptide: Voltage-gated inwardly rectifying potassium channel KCNH7 (1195 aa).

Over 1 to 412 the chain is Cytoplasmic; it reads MPVRRGHVAP…YSPFKAVWDW (412 aa). A PAS domain is found at 41 to 70; sequence IIYCNDGFCEMTGFSRPDVMQKPCTCDFLH. The PAC domain occupies 92 to 144; it reads RKVEVTYYHKNGSTFICNTHIIPVKNQEGVAMMFIINFEYVTDEENAATPERV. A Phosphoserine modification is found at S174. A disordered region spans residues 194 to 216; the sequence is SVAMKHFKSPTKESCSPSEADDT. 2 positions are modified to phosphoserine: S238 and S319. The helical transmembrane segment at 413 to 433 threads the bilayer; sequence LILLLVIYTAIFTPYSAAFLL. Over 434-449 the chain is Extracellular; it reads NDREEQKRRECGYSCS. The helical transmembrane segment at 450–470 threads the bilayer; sequence PLNVVDLIVDIMFIIDILINF. Topologically, residues 471-494 are cytoplasmic; sequence RTTYVNQNEEVVSDPAKIAIHYFK. A helical membrane pass occupies residues 495–515; it reads GWFLIDMVAAIPFDLLIFGSG. The Extracellular portion of the chain corresponds to 516–521; the sequence is SDETTT. The chain crosses the membrane as a helical; Voltage-sensor span at residues 522 to 542; sequence LIGLLKTARLLRLVRVARKLD. Residues 543 to 549 lie on the Cytoplasmic side of the membrane; that stretch reads RYSEYGA. The helical transmembrane segment at 550 to 570 threads the bilayer; that stretch reads AVLMLLMCIFALIAHWLACIW. Topologically, residues 571-614 are extracellular; it reads YAIGNVERPYLTDKIGWLDSLGTQIGKRYNDSDSSSGPSIKDKY. N600 carries an N-linked (GlcNAc...) asparagine glycan. An intramembrane region (pore-forming) is located at residues 615 to 635; sequence VTALYFTFSSLTSVGFGNVSP. The Selectivity filter signature appears at 627 to 632; it reads SVGFGN. Residues 636 to 641 lie on the Extracellular side of the membrane; the sequence is NTNSEK. Residues 642–662 form a helical membrane-spanning segment; the sequence is IFSICVMLIGSLMYASIFGNV. Residues 663–1195 are Cytoplasmic-facing; that stretch reads SAIIQRLYSG…HVSDPGLPGK (533 aa). The cNMP-binding domain stretch occupies residues 745-845; it reads AFRGASKGCL…IQREDLLEVL (101 aa). Positions 870-915 are disordered; the sequence is AKSQSVNDSEGDTGKLRRRRLSFESEGEKDFSKENSANDADDSTDT. Over residues 890–902 the composition is skewed to basic and acidic residues; sequence LSFESEGEKDFSK. A phosphoserine mark is found at S891 and S894. Positions 1027-1054 form a coiled coil; the sequence is YGEVEQRLDLLQEQLNRLESQMTTDIQA.

The protein belongs to the potassium channel family. H (Eag) (TC 1.A.1.20) subfamily. Kv11.3/KCNH7 sub-subfamily. As to quaternary structure, the potassium channel is probably composed of a homo- or heterotetrameric complex of pore-forming alpha subunits that can associate only within their subfamily.

The protein resides in the cell membrane. The catalysed reaction is K(+)(in) = K(+)(out). Functionally, pore-forming (alpha) subunit of voltage-gated inwardly rectifying potassium channel. Exhibits faster activation and deactivation kinetics and slow inactivation at membrane potentials positive to 240 mV, resulting in the weakest inward rectification. The protein is Voltage-gated inwardly rectifying potassium channel KCNH7 of Mus musculus (Mouse).